We begin with the raw amino-acid sequence, 582 residues long: Threonine--tRNA ligase (582 aa).

A catalytic region spans residues 185-478 (DHRKLGKELD…LVEHYGGAFP (294 aa)). 3 residues coordinate Zn(2+): Cys-278, His-329, and His-455.

The protein belongs to the class-II aminoacyl-tRNA synthetase family. Homodimer. Requires Zn(2+) as cofactor.

It is found in the cytoplasm. It carries out the reaction tRNA(Thr) + L-threonine + ATP = L-threonyl-tRNA(Thr) + AMP + diphosphate + H(+). Its function is as follows. Catalyzes the attachment of threonine to tRNA(Thr) in a two-step reaction: L-threonine is first activated by ATP to form Thr-AMP and then transferred to the acceptor end of tRNA(Thr). Also edits incorrectly charged L-seryl-tRNA(Thr). The protein is Threonine--tRNA ligase of Borrelia garinii subsp. bavariensis (strain ATCC BAA-2496 / DSM 23469 / PBi) (Borreliella bavariensis).